The primary structure comprises 492 residues: Protein nucleotidyltransferase YdiU (492 aa).

Gly-90, Gly-92, Arg-93, Lys-113, Asp-125, Gly-126, Arg-176, and Arg-183 together coordinate ATP. The Proton acceptor role is filled by Asp-252. Residues Asn-253 and Asp-262 each coordinate Mg(2+). Residue Asp-262 coordinates ATP.

The protein belongs to the SELO family. Mg(2+) is required as a cofactor. It depends on Mn(2+) as a cofactor.

The enzyme catalyses L-seryl-[protein] + ATP = 3-O-(5'-adenylyl)-L-seryl-[protein] + diphosphate. The catalysed reaction is L-threonyl-[protein] + ATP = 3-O-(5'-adenylyl)-L-threonyl-[protein] + diphosphate. It carries out the reaction L-tyrosyl-[protein] + ATP = O-(5'-adenylyl)-L-tyrosyl-[protein] + diphosphate. It catalyses the reaction L-histidyl-[protein] + UTP = N(tele)-(5'-uridylyl)-L-histidyl-[protein] + diphosphate. The enzyme catalyses L-seryl-[protein] + UTP = O-(5'-uridylyl)-L-seryl-[protein] + diphosphate. The catalysed reaction is L-tyrosyl-[protein] + UTP = O-(5'-uridylyl)-L-tyrosyl-[protein] + diphosphate. In terms of biological role, nucleotidyltransferase involved in the post-translational modification of proteins. It can catalyze the addition of adenosine monophosphate (AMP) or uridine monophosphate (UMP) to a protein, resulting in modifications known as AMPylation and UMPylation. This Thioalkalivibrio sulfidiphilus (strain HL-EbGR7) protein is Protein nucleotidyltransferase YdiU.